Here is a 462-residue protein sequence, read N- to C-terminus: Kinetochore protein nsk1 (462 aa).

A compositionally biased stretch (polar residues) spans proline 104–aspartate 120. 3 disordered regions span residues proline 104–isoleucine 161, glutamate 180–threonine 240, and asparagine 320–serine 462. A compositionally biased stretch (basic and acidic residues) spans asparagine 121–lysine 138. Over residues glycine 146–threonine 156 the composition is skewed to polar residues. The segment covering glutamate 180–lysine 189 has biased composition (basic and acidic residues). Residues lysine 229–threonine 240 show a composition bias toward polar residues. Residues lysine 324–glycine 333 show a composition bias toward basic and acidic residues. The segment covering tryptophan 422–aspartate 444 has biased composition (polar residues). The span at histidine 449–serine 462 shows a compositional bias: basic residues.

In terms of assembly, interacts with dlc1. The dlc1-nsk1 complex seems to oligomerize in chain-like structures. Also binds directly to spindle microtubules. Phosphorylated by cdk1 at prometaphase arrest. Phosphorylation prevents nsk1 kinetochore and spindle targeting. Dephosphorylated by clp1 at anaphase onset controls its relocalization.

It localises to the nucleus. The protein localises to the nucleolus. It is found in the cytoplasm. Its subcellular location is the cytoskeleton. The protein resides in the spindle. It localises to the chromosome. The protein localises to the centromere. It is found in the kinetochore. In terms of biological role, ensures chromosome alignment and accurate chromosome segregation during mitosis. Promotes proper kinetochore-microtubule (k-MT) interactions during anaphase B. The phosphorylation status of nsk1 affects the proper k-MT coupling, ensuring that it interacts stably only at the correct time during mitosis. The chain is Kinetochore protein nsk1 (nsk1) from Schizosaccharomyces pombe (strain 972 / ATCC 24843) (Fission yeast).